The following is a 548-amino-acid chain: Tryprostatin B 6-hydroxylase (548 aa).

3 helical membrane passes run 5 to 25, 35 to 54, and 73 to 93; these read MKCG…LWYF, WRYV…LLYA, and LLMV…RTLF. Residue Cys-491 participates in heme binding.

It belongs to the cytochrome P450 family. It depends on heme as a cofactor.

The protein localises to the membrane. The catalysed reaction is tryprostatin B + reduced [NADPH--hemoprotein reductase] + O2 = 6-hydroxytryprostatin B + oxidized [NADPH--hemoprotein reductase] + H2O + H(+). Its pathway is mycotoxin biosynthesis. Its function is as follows. Cytochrome P450 monooxygenase; part of the gene cluster that mediates the biosynthesis of fumitremorgins, indole alkaloids that carry not only intriguing chemical structures, but also interesting biological and pharmacological activities. The biosynthesis of fumitremorgin-type alkaloids begins by condensation of the two amino acids L-tryptophan and L-proline to brevianamide F, catalyzed by the non-ribosomal peptide synthetase ftmPS/ftmA. Brevianamide F is then prenylated by the prenyltransferase ftmPT1/ftmB in the presence of dimethylallyl diphosphate, resulting in the formation of tryprostatin B. The three cytochrome P450 monooxygenases, ftmP450-1/ftmC, ftmP450-2/ftmE and ftmP450-3/FtmG, are responsible for the conversion of tryprostatin B to 6-hydroxytryprostatin B, tryprostatin A to fumitremorgin C and fumitremorgin C to 12,13-dihydroxyfumitremorgin C, respectively. The putative methyltransferase ftmMT/ftmD is expected for the conversion of 6-hydroxytryprostatin B to tryprostatin A. FtmPT2/FtmH catalyzes the prenylation of 12,13-dihydroxyfumitre-morgin C in the presence of dimethylallyl diphosphate, resulting in the formation of fumitremorgin B. Fumitremorgin B is further converted to verruculogen by ftmOx1/ftmF via the insertion of an endoperoxide bond between the two prenyl moieties. Finally, verruculogen is further converted to fumitremorgin A by the verruculogen prenyltransferase ftmPT3. This is Tryprostatin B 6-hydroxylase from Neosartorya fischeri (strain ATCC 1020 / DSM 3700 / CBS 544.65 / FGSC A1164 / JCM 1740 / NRRL 181 / WB 181) (Aspergillus fischerianus).